Consider the following 229-residue polypeptide: Peptidyl-prolyl cis-trans isomerase FKBP17-1, chloroplastic (229 aa).

The transit peptide at 1-63 (MIRCFAWTPL…SISLSIIAVT (63 aa)) directs the protein to the chloroplast. Residues 105–225 (GDQIEIHYYG…VFDIELVSTR (121 aa)) enclose the PPIase FKBP-type domain.

Belongs to the FKBP-type PPIase family.

It is found in the plastid. The protein localises to the chloroplast thylakoid lumen. It catalyses the reaction [protein]-peptidylproline (omega=180) = [protein]-peptidylproline (omega=0). Functionally, PPIases accelerate the folding of proteins. It catalyzes the cis-trans isomerization of proline imidic peptide bonds in oligopeptides. The polypeptide is Peptidyl-prolyl cis-trans isomerase FKBP17-1, chloroplastic (FKBP17-1) (Arabidopsis thaliana (Mouse-ear cress)).